The sequence spans 410 residues: MTTFGHDTWWLVAAKAIAVFVFLMLTVLVAILAERKLLGRMQLRPGPNRVGPKGALQSLADGIKLALKESITPGGIDRFVYFVAPIISVIPAFTAFAFIPFGPEVSVFGHRTPLQITDLPVAVLFILGLSAIGVYGIVLGGWASGSTYPLLGGVRSTAQVISYEVAMGLSFATVFLMAGTMSTSQIVAAQDGVWYAFLLLPSFVIYLISMVGETNRAPFDLPEAEGELVAGFHTEYSSLKFAMFMLAEYVNMTTVSALAATLFFGGWHAPWPLNMWASANTGWWPLIWFTAKVWGFLFIYFWLRATLPRLRYDQFMALGWKLLIPVSLVWVMVAAIIRSLRNQGYQYWTPTLVFSSIVVAAAMVLLLRKPLSAPGARASARQRGDEGTSPEPAFPTPPLLAGATKENAGG.

The next 9 helical transmembrane spans lie at 11–31, 79–99, 119–139, 160–180, 192–212, 257–277, 283–303, 317–337, and 347–367; these read LVAAKAIAVFVFLMLTVLVAI, FVYFVAPIISVIPAFTAFAFI, LPVAVLFILGLSAIGVYGIVL, VISYEVAMGLSFATVFLMAGT, GVWYAFLLLPSFVIYLISMVG, ALAATLFFGGWHAPWPLNMWA, WWPLIWFTAKVWGFLFIYFWL, ALGWKLLIPVSLVWVMVAAII, and YWTPTLVFSSIVVAAAMVLLL. The segment at 376-410 is disordered; it reads ARASARQRGDEGTSPEPAFPTPPLLAGATKENAGG.

The protein belongs to the complex I subunit 1 family. NDH-1 is composed of 14 different subunits. Subunits NuoA, H, J, K, L, M, N constitute the membrane sector of the complex.

The protein localises to the cell membrane. It carries out the reaction a quinone + NADH + 5 H(+)(in) = a quinol + NAD(+) + 4 H(+)(out). Functionally, NDH-1 shuttles electrons from NADH, via FMN and iron-sulfur (Fe-S) centers, to quinones in the respiratory chain. The immediate electron acceptor for the enzyme in this species is believed to be menaquinone. Couples the redox reaction to proton translocation (for every two electrons transferred, four hydrogen ions are translocated across the cytoplasmic membrane), and thus conserves the redox energy in a proton gradient. The sequence is that of NADH-quinone oxidoreductase subunit H from Mycobacterium bovis (strain ATCC BAA-935 / AF2122/97).